A 265-amino-acid polypeptide reads, in one-letter code: U6 snRNA phosphodiesterase 1 (265 aa).

A disordered region spans residues 1 to 67; it reads MSAAPLVGYS…EGPVDDSAKH (67 aa). The span at 20 to 32 shows a compositional bias: basic and acidic residues; that stretch reads AGARVRPGAEGRS. His120 acts as the Proton acceptor in catalysis. AMP is bound at residue 120 to 122; that stretch reads HLS. Residues Gln164, Tyr202, and 206–210 each bind UMP; that span reads SFHIS. AMP-binding positions include Tyr202 and 204–210; that span reads DPSFHIS. Catalysis depends on His208, which acts as the Proton donor.

This sequence belongs to the 2H phosphoesterase superfamily. USB1 family. As to quaternary structure, interacts with PLRG1, CDC5L and PRPF19.

It localises to the nucleus. It carries out the reaction a 3'-end uridylyl-uridine-RNA = a 3'-end 2',3'-cyclophospho-uridine-RNA + uridine. It catalyses the reaction a 3'-end uridylyl-adenosine-RNA = a 3'-end 2',3'-cyclophospho-uridine-RNA + adenosine. 3'-5' RNA exonuclease that trims the 3' end of oligo(U) and oligo(A) tracts of the pre-U6 small nuclear RNA (snRNA) molecule, leading to the formation of a mature U6 snRNA 3' end-terminated with a 2',3'-cyclic phosphate. Participates in the U6 snRNA 3' end processing that prevents U6 snRNA degradation. In addition also removes uridines from the 3' end of U6atac snRNA and possibly the vault RNA VTRNA1-1. The protein is U6 snRNA phosphodiesterase 1 of Bos taurus (Bovine).